Consider the following 410-residue polypeptide: Peptidase T (410 aa).

Histidine 79 is a Zn(2+) binding site. Residue aspartate 81 is part of the active site. Zn(2+) is bound at residue aspartate 142. Glutamate 176 acts as the Proton acceptor in catalysis. Zn(2+) is bound by residues glutamate 177, aspartate 199, and histidine 381.

This sequence belongs to the peptidase M20B family. It depends on Zn(2+) as a cofactor.

The protein localises to the cytoplasm. It catalyses the reaction Release of the N-terminal residue from a tripeptide.. Its function is as follows. Cleaves the N-terminal amino acid of tripeptides. The sequence is that of Peptidase T from Bacillus pumilus (strain SAFR-032).